A 295-amino-acid chain; its full sequence is Phosphate transport system permease protein PstA (295 aa).

The next 6 helical transmembrane spans lie at 29 to 49 (IALV…IWIL), 88 to 108 (LLIL…GIYL), 126 to 146 (DILL…IVVA), 149 to 169 (EHFS…PIVI), 198 to 218 (ISAI…LLAI), and 266 to 286 (NLAW…NILA). Positions 83–286 (IAGSGLLILW…LCVLLLNILA (204 aa)) constitute an ABC transmembrane type-1 domain.

The protein belongs to the binding-protein-dependent transport system permease family. CysTW subfamily.

The protein resides in the cell inner membrane. Its function is as follows. Part of a binding-protein-dependent transport system for phosphate; probably responsible for the translocation of the substrate across the membrane. This Yersinia pestis protein is Phosphate transport system permease protein PstA (pstA).